The chain runs to 259 residues: Phosphatidylinositol transfer protein 2 (259 aa).

Residues 231 to 259 (LTIEDIRKIEEETKAELAKKLEENKAANK) adopt a coiled-coil conformation.

The protein belongs to the PtdIns transfer protein family. PI transfer class IIA subfamily.

It is found in the cytoplasm. Its subcellular location is the golgi apparatus. In terms of biological role, catalyzes the transfer of PtdIns and phosphatidylcholine between membranes. This is Phosphatidylinositol transfer protein 2 (pitB) from Dictyostelium discoideum (Social amoeba).